We begin with the raw amino-acid sequence, 182 residues long: Putative pre-16S rRNA nuclease (182 aa).

This sequence belongs to the YqgF nuclease family.

It is found in the cytoplasm. Its function is as follows. Could be a nuclease involved in processing of the 5'-end of pre-16S rRNA. This Corynebacterium aurimucosum (strain ATCC 700975 / DSM 44827 / CIP 107346 / CN-1) (Corynebacterium nigricans) protein is Putative pre-16S rRNA nuclease.